We begin with the raw amino-acid sequence, 76 residues long: Large ribosomal subunit protein bL28 (76 aa).

This sequence belongs to the bacterial ribosomal protein bL28 family.

The polypeptide is Large ribosomal subunit protein bL28 (Opitutus terrae (strain DSM 11246 / JCM 15787 / PB90-1)).